A 118-amino-acid polypeptide reads, in one-letter code: Mating-type P-specific polypeptide Pc (118 aa).

Positions 29-97 (KTTIYKNGFM…VRKQIAKLER (69 aa)) form a DNA-binding region, HMG box.

The protein localises to the nucleus. Its function is as follows. Mating type proteins are sequence specific DNA-binding proteins that act as master switches in yeast differentiation by controlling gene expression in a cell type-specific fashion. Required for conjugation and efficient meiosis. This chain is Mating-type P-specific polypeptide Pc (matPc), found in Schizosaccharomyces kambucha (Fission yeast).